Here is a 399-residue protein sequence, read N- to C-terminus: MNIHEHQAKAVLAEFGAPVPRGYPAFTVEEAVAAAEKLGGPVFVVKSQIHAGGRGKGKFKGLGPDAKGGVRVVKSVEDVKTNAAEMLGRVLVTHQTGPKGKQVNRLYVEEGAAIAKEFYLSLLVDRETSMVSVVASTEGGMDIEDVAHATPEKIHSFSIDPATGVWPTHARALAKALGLTGGLAKEAATLLGQLYTAFLAKDMAMLEINPLIVTEDDHLKVLDAKLSFDGNALYRHPDIRALRDESEEDPKEIEASKYDLAYIALDGEIGCMVNGAGLAMATMDIIKLYGAEPANFLDVGGGASKEKVTAAFKIITADPAVKGILVNIFGGIMRCDIIAEGVIAAVKEVGLQVPLVVRLEGTNVELGKKIIRESGLNVIAANDLSDGAEKIVKAVKGAA.

Positions 9–254 (KAVLAEFGAP…ESEEDPKEIE (246 aa)) constitute an ATP-grasp domain. ATP contacts are provided by residues Lys46, 53–55 (GRG), Glu109, Ala112, and Glu117. Mg(2+)-binding residues include Asn209 and Asp223. Substrate is bound by residues Asn274 and 331 to 333 (GIM).

The protein belongs to the succinate/malate CoA ligase beta subunit family. In terms of assembly, heterotetramer of two alpha and two beta subunits. Mg(2+) serves as cofactor.

The catalysed reaction is succinate + ATP + CoA = succinyl-CoA + ADP + phosphate. It carries out the reaction GTP + succinate + CoA = succinyl-CoA + GDP + phosphate. It functions in the pathway carbohydrate metabolism; tricarboxylic acid cycle; succinate from succinyl-CoA (ligase route): step 1/1. Functionally, succinyl-CoA synthetase functions in the citric acid cycle (TCA), coupling the hydrolysis of succinyl-CoA to the synthesis of either ATP or GTP and thus represents the only step of substrate-level phosphorylation in the TCA. The beta subunit provides nucleotide specificity of the enzyme and binds the substrate succinate, while the binding sites for coenzyme A and phosphate are found in the alpha subunit. The polypeptide is Succinate--CoA ligase [ADP-forming] subunit beta (Caulobacter sp. (strain K31)).